The primary structure comprises 396 residues: ATP phosphoribosyltransferase regulatory subunit (396 aa).

It belongs to the class-II aminoacyl-tRNA synthetase family. HisZ subfamily. As to quaternary structure, heteromultimer composed of HisG and HisZ subunits.

The protein resides in the cytoplasm. Its pathway is amino-acid biosynthesis; L-histidine biosynthesis; L-histidine from 5-phospho-alpha-D-ribose 1-diphosphate: step 1/9. Required for the first step of histidine biosynthesis. May allow the feedback regulation of ATP phosphoribosyltransferase activity by histidine. This chain is ATP phosphoribosyltransferase regulatory subunit, found in Alkaliphilus metalliredigens (strain QYMF).